Here is a 72-residue protein sequence, read N- to C-terminus: Exodeoxyribonuclease 7 small subunit (72 aa).

This sequence belongs to the XseB family. In terms of assembly, heterooligomer composed of large and small subunits.

The protein localises to the cytoplasm. It catalyses the reaction Exonucleolytic cleavage in either 5'- to 3'- or 3'- to 5'-direction to yield nucleoside 5'-phosphates.. In terms of biological role, bidirectionally degrades single-stranded DNA into large acid-insoluble oligonucleotides, which are then degraded further into small acid-soluble oligonucleotides. The sequence is that of Exodeoxyribonuclease 7 small subunit from Chlamydia trachomatis serovar D (strain ATCC VR-885 / DSM 19411 / UW-3/Cx).